The primary structure comprises 81 residues: Dermaseptin-S6 (81 aa).

The first 22 residues, 1 to 22 (MDILKKSLFFILFLGLVSLSIS), serve as a signal peptide directing secretion. The tract at residues 22–49 (SEEEKRENEDEEDQEDDEQSEEKRGLWS) is disordered. Residues 23–45 (EEEKRENEDEEDQEDDEQSEEKR) constitute a propeptide that is removed on maturation. Over residues 30-41 (EDEEDQEDDEQS) the composition is skewed to acidic residues. Ile-78 bears the Isoleucine amide mark. A propeptide spanning residues 80-81 (EQ) is cleaved from the precursor.

The protein belongs to the frog skin active peptide (FSAP) family. Dermaseptin subfamily. Expressed by the skin glands.

It localises to the secreted. In terms of biological role, antimicrobial peptide. The chain is Dermaseptin-S6 from Phyllomedusa sauvagei (Sauvage's leaf frog).